The following is a 675-amino-acid chain: PTS system glucose-specific EIICBA component (675 aa).

Residues 3–414 enclose the PTS EIIC type-1 domain; it reads KKLFGQLQRI…FNFKTPGRED (412 aa). 11 consecutive transmembrane segments (helical) span residues 16–36, 59–79, 81–101, 126–146, 173–193, 199–219, 273–293, 303–323, 328–348, 355–375, and 378–398; these read LMLPVAILPAAGLLLAIGTAF, MMTGAGGIIFDNLPIIFALGV, IGLAGGDGVAAIAAFVGFIIM, VLGIPTLQTGVFGGIIIGALA, IMMATTSFILAFPMAWIWPFI, AFSTGLLDSNTGLAVFLFGFI, FMQGEFPVMMFGLPAAALAIY, VVGGLMLSAALTSFLTGITEP, FLFVAPLLFFIHAVLDGLSFL, LHLGYTFSGGFIDFVLLGILP, and TPWWLVIPVGLVYAVIYYVVF. The PTS EIIB type-1 domain occupies 425–506; it reads SKLPFDVLDA…ARIMNGDITK (82 aa). Catalysis depends on Cys447, which acts as the Phosphocysteine intermediate; for EIIB activity. Residues 547–651 enclose the PTS EIIA type-1 domain; sequence DKVFSEKMMG…SVVTPVIITN (105 aa). His599 acts as the Tele-phosphohistidine intermediate; for EIIA activity in catalysis.

The protein localises to the cell membrane. It catalyses the reaction N(pros)-phospho-L-histidyl-[protein] + D-glucose(out) = D-glucose 6-phosphate(in) + L-histidyl-[protein]. Its function is as follows. The phosphoenolpyruvate-dependent sugar phosphotransferase system (sugar PTS), a major carbohydrate active transport system, catalyzes the phosphorylation of incoming sugar substrates concomitantly with their translocation across the cell membrane. This system is involved in glucose transport. The polypeptide is PTS system glucose-specific EIICBA component (ptsG) (Staphylococcus haemolyticus (strain JCSC1435)).